A 318-amino-acid polypeptide reads, in one-letter code: Phospho-N-acetylmuramoyl-pentapeptide-transferase (318 aa).

The next 10 helical transmembrane spans lie at 5 to 25 (LKPL…VLAF), 50 to 70 (PTMG…VLAP), 71 to 91 (PSPL…IGLV), 115 to 135 (VLLG…GSVI), 139 to 159 (VTGW…LLLV), 173 to 193 (GLAA…ALTL), 198 to 218 (LVTF…YNFH), 222 to 242 (VFMG…LAIM), 248 to 268 (VLPV…LQVV), and 298 to 318 (VLFF…LLTI).

Belongs to the glycosyltransferase 4 family. MraY subfamily. It depends on Mg(2+) as a cofactor.

The protein localises to the cell membrane. The enzyme catalyses UDP-N-acetyl-alpha-D-muramoyl-L-alanyl-gamma-D-glutamyl-meso-2,6-diaminopimeloyl-D-alanyl-D-alanine + di-trans,octa-cis-undecaprenyl phosphate = di-trans,octa-cis-undecaprenyl diphospho-N-acetyl-alpha-D-muramoyl-L-alanyl-D-glutamyl-meso-2,6-diaminopimeloyl-D-alanyl-D-alanine + UMP. It functions in the pathway cell wall biogenesis; peptidoglycan biosynthesis. Functionally, catalyzes the initial step of the lipid cycle reactions in the biosynthesis of the cell wall peptidoglycan: transfers peptidoglycan precursor phospho-MurNAc-pentapeptide from UDP-MurNAc-pentapeptide onto the lipid carrier undecaprenyl phosphate, yielding undecaprenyl-pyrophosphoryl-MurNAc-pentapeptide, known as lipid I. This is Phospho-N-acetylmuramoyl-pentapeptide-transferase from Moorella thermoacetica (strain ATCC 39073 / JCM 9320).